The sequence spans 443 residues: Glutamate--tRNA ligase 2 (443 aa).

A 'HIGH' region motif is present at residues 7-17; the sequence is PSPTGLIHVGN. Residues 240 to 244 carry the 'KMSKS' region motif; that stretch reads KLSKR. Residue Lys-243 participates in ATP binding.

The protein belongs to the class-I aminoacyl-tRNA synthetase family. Glutamate--tRNA ligase type 1 subfamily. In terms of assembly, monomer.

It localises to the cytoplasm. It catalyses the reaction tRNA(Glu) + L-glutamate + ATP = L-glutamyl-tRNA(Glu) + AMP + diphosphate. In terms of biological role, catalyzes the attachment of glutamate to tRNA(Glu) in a two-step reaction: glutamate is first activated by ATP to form Glu-AMP and then transferred to the acceptor end of tRNA(Glu). The protein is Glutamate--tRNA ligase 2 of Gluconacetobacter diazotrophicus (strain ATCC 49037 / DSM 5601 / CCUG 37298 / CIP 103539 / LMG 7603 / PAl5).